A 69-amino-acid polypeptide reads, in one-letter code: NADH dehydrogenase [ubiquinone] 1 beta subcomplex subunit 2 (69 aa).

This sequence belongs to the complex I NDUFB2 subunit family. In terms of assembly, complex I is composed of at least 49 different subunits.

Its subcellular location is the mitochondrion inner membrane. Accessory subunit of the mitochondrial membrane respiratory chain NADH dehydrogenase (Complex I), that is believed not to be involved in catalysis. Complex I functions in the transfer of electrons from NADH to the respiratory chain. The immediate electron acceptor for the enzyme is believed to be ubiquinone. This chain is NADH dehydrogenase [ubiquinone] 1 beta subcomplex subunit 2, found in Arabidopsis thaliana (Mouse-ear cress).